The following is a 168-amino-acid chain: MAGDLRQELLAYLHELDIRPVCAEHPEVFTVEEMMPHVQHLGGAHSKNLFLKDKKKKGLWLVSVLHDRQVNLNDLAKKLNLGSGNLRFADEASMLEKLKVGQGCATPLALFCDRGDVQFVLDAQFLEGGYERVYFHPMTNAATLGMTPQEFVTFLKKTGHDPIIIHFD.

It belongs to the PRORSD1 family.

This is Prolyl-tRNA synthetase associated domain-containing protein 1 (prorsd1p) from Xenopus laevis (African clawed frog).